The following is a 107-amino-acid chain: Nucleoid-associated protein BLi00029/BL02358 (107 aa).

The interval 1-27 is disordered; that stretch reads MRGGMGNMQKMMKQMQKMQKDMQKAQE. The segment covering 8–17 has biased composition (low complexity); the sequence is MQKMMKQMQK. Basic and acidic residues predominate over residues 18 to 27; sequence MQKDMQKAQE.

It belongs to the YbaB/EbfC family. In terms of assembly, homodimer.

It localises to the cytoplasm. The protein localises to the nucleoid. Its function is as follows. Binds to DNA and alters its conformation. May be involved in regulation of gene expression, nucleoid organization and DNA protection. This chain is Nucleoid-associated protein BLi00029/BL02358, found in Bacillus licheniformis (strain ATCC 14580 / DSM 13 / JCM 2505 / CCUG 7422 / NBRC 12200 / NCIMB 9375 / NCTC 10341 / NRRL NRS-1264 / Gibson 46).